The sequence spans 542 residues: Cryptochrome-1 (542 aa).

The region spanning 5–140 (GANVIWFRHG…DFVEKVSHTL (136 aa)) is the Photolyase/cryptochrome alpha/beta domain. Residues R237, S265, S267, Q311, H378, 410-412 (DAD), C416, and N419 each bind FAD.

This sequence belongs to the DNA photolyase class-1 family. As to quaternary structure, interacts with tim and per; promoted by light conditions. Interaction with tim irreversibly commits tim to proteasomal degradation. Interacts with l(1)G0136/CG8198. It depends on FAD as a cofactor. Expressed at higher levels in the head than in body and it is more expressed in antennae than in legs, wings and mouth appendages. Prominent expression is seen in cells of the lateral brain, which are close to or coincident with the clock neurons. Abundance oscillates in a circadian manner.

The protein localises to the cytoplasm. It is found in the perinuclear region. It localises to the nucleus. Blue light-dependent regulator that is the input of the circadian feedback loop. Has no photolyase activity for cyclobutane pyrimidine dimers or 6-4 photoproducts. Regulation of expression by light suggests a role in photoreception for locomotor activity rhythms. Functions, together with per, as a transcriptional repressor required for the oscillation of peripheral circadian clocks and for the correct specification of clock cells. Genes directly activated by the transcription factors Clock (Clk) and cycle (cyc) are repressed by cry. Necessary for light-dependent magnetosensitivity, an intact circadian system is not required for the magnetoreception mechanism to operate. Required for both the naive and trained responses to magnetic field, consistent with the notion that cry is in the input pathway of magnetic sensing. This Drosophila melanogaster (Fruit fly) protein is Cryptochrome-1.